We begin with the raw amino-acid sequence, 787 residues long: LPS-assembly protein LptD (787 aa).

The signal sequence occupies residues 1–39 (MPRKTLLPLVPACDAAPRRKRLAAALLAVPGLVPAVSQA).

Belongs to the LptD family. Component of the lipopolysaccharide transport and assembly complex. Interacts with LptE and LptA.

It is found in the cell outer membrane. In terms of biological role, together with LptE, is involved in the assembly of lipopolysaccharide (LPS) at the surface of the outer membrane. This Burkholderia thailandensis (strain ATCC 700388 / DSM 13276 / CCUG 48851 / CIP 106301 / E264) protein is LPS-assembly protein LptD.